A 487-amino-acid polypeptide reads, in one-letter code: Protein DETOXIFICATION 11 (487 aa).

Transmembrane regions (helical) follow at residues 35–55 (LICF…LQII), 73–93 (FAIS…SCAL), 122–142 (LVCL…VILG), 151–171 (AGRF…LQPL), 184–204 (LLIT…LLVY), 211–231 (IGGA…LGSF), 264–284 (AAML…SGLL), 293–313 (VLSV…AIAA), 330–350 (AAHI…LMVG), 377–397 (MAPL…LSGV), 412–432 (FGAF…WVHL), and 435–455 (VGLW…LALV).

The protein belongs to the multi antimicrobial extrusion (MATE) (TC 2.A.66.1) family.

Its subcellular location is the membrane. In Arabidopsis thaliana (Mouse-ear cress), this protein is Protein DETOXIFICATION 11.